A 475-amino-acid polypeptide reads, in one-letter code: UDP-N-acetylmuramate--L-alanine ligase (475 aa).

Residue 125 to 131 (GTHGKTS) coordinates ATP.

Belongs to the MurCDEF family.

It localises to the cytoplasm. It carries out the reaction UDP-N-acetyl-alpha-D-muramate + L-alanine + ATP = UDP-N-acetyl-alpha-D-muramoyl-L-alanine + ADP + phosphate + H(+). It functions in the pathway cell wall biogenesis; peptidoglycan biosynthesis. Its function is as follows. Cell wall formation. This Mycolicibacterium gilvum (strain PYR-GCK) (Mycobacterium gilvum (strain PYR-GCK)) protein is UDP-N-acetylmuramate--L-alanine ligase.